Here is a 183-residue protein sequence, read N- to C-terminus: uncharacterized protein (183 aa).

The next 4 helical transmembrane spans lie at 37–59 (LFGYISVGFLLFHPLLEVLPRQF), 79–98 (AILLGIAGWAVMLTLAVTSV), 110–132 (WRTFHGILAVVLITVVGYHVLVL), and 142–161 (AFYAVLLAGGYVTMIKTYVF).

The protein resides in the cell membrane. This is an uncharacterized protein from Archaeoglobus fulgidus (strain ATCC 49558 / DSM 4304 / JCM 9628 / NBRC 100126 / VC-16).